We begin with the raw amino-acid sequence, 689 residues long: Pentatricopeptide repeat-containing protein At1g71460, chloroplastic (689 aa).

Residues 1–49 (MEVVSSLGIRDLPASLSVTTSLNHRPHRSDKDGAPAKSPIRPSRTRRPS) constitute a chloroplast transit peptide. The disordered stretch occupies residues 16 to 68 (LSVTTSLNHRPHRSDKDGAPAKSPIRPSRTRRPSTSPAKKPKPFRERDAFPSS). Residues 38–52 (SPIRPSRTRRPSTSP) are compositionally biased toward low complexity. PPR repeat units lie at residues 75–109 (NPYIIHRDIQIFARQNNLEVALTILDYLEQRGIPV), 110–144 (NATTFSALLEACVRRKSLLHGKQVHVHIRINGLES), 145–175 (NEFLRTKLVHMYTACGSVKDAQKVFDESTSS), 176–212 (NVYSWNALLRGTVISGKKRYQDVLSTFTEMRELGVDL), 213–247 (NVYSLSNVFKSFAGASALRQGLKTHALAIKNGLFN), 248–282 (SVFLKTSLVDMYFKCGKVGLARRVFDEIVERDIVV), 283–309 (WGAMIAGLAHNKRQWEALGLFRTMISE), 315–350 (NSVILTTILPVLGDVKALKLGKEVHAHVLKSKNYVE), 351–381 (QPFVHSGLIDLYCKCGDMASGRRVFYGSKQR), 382–416 (NAISWTALMSGYAANGRFDQALRSIVWMQQEGFRP), 417–451 (DVVTIATVLPVCAELRAIKQGKEIHCYALKNLFLP), 452–482 (NVSLVTSLMVMYSKCGVPEYPIRLFDRLEQR), 483–517 (NVKAWTAMIDCYVENCDLRAGIEVFRLMLLSKHRP), 518–552 (DSVTMGRVLTVCSDLKALKLGKELHGHILKKEFES), 553–583 (IPFVSARIIKMYGKCGDLRSANFSFDAVAVK), 584–618 (GSLTWTAIIEAYGCNELFRDAINCFEQMVSRGFTP), 619–649 (NTFTFTAVLSICSQAGFVDEAYRFFNLMLRM), and 655–689 (SEEHYSLVIELLNRCGRVEEAQRLAVMSSSSSLQT).

This sequence belongs to the PPR family. PCMP-A subfamily.

The protein localises to the plastid. Its subcellular location is the chloroplast. The protein is Pentatricopeptide repeat-containing protein At1g71460, chloroplastic (PCMP-A3) of Arabidopsis thaliana (Mouse-ear cress).